A 129-amino-acid polypeptide reads, in one-letter code: Large ribosomal subunit protein bL19 (129 aa).

Belongs to the bacterial ribosomal protein bL19 family.

In terms of biological role, this protein is located at the 30S-50S ribosomal subunit interface and may play a role in the structure and function of the aminoacyl-tRNA binding site. This is Large ribosomal subunit protein bL19 from Bordetella avium (strain 197N).